Consider the following 356-residue polypeptide: Tyrosine recombinase XerS (356 aa).

The 106-residue stretch at 16–121 folds into the Core-binding (CB) domain; that stretch reads LMPWYVLEYY…ALSSLYKYLT (106 aa). One can recognise a Tyr recombinase domain in the interval 169 to 354; it reads GFLTYIDQEH…VNDEQKNALD (186 aa). Catalysis depends on residues Arg210, Lys234, His306, Arg309, and His332. Catalysis depends on Tyr341, which acts as the O-(3'-phospho-DNA)-tyrosine intermediate.

Belongs to the 'phage' integrase family. XerS subfamily.

It is found in the cytoplasm. With respect to regulation, ftsK is required for recombination. In terms of biological role, site-specific tyrosine recombinase, which acts by catalyzing the cutting and rejoining of the recombining DNA molecules. Essential to convert dimers of the bacterial chromosome into monomers to permit their segregation at cell division. This is Tyrosine recombinase XerS from Streptococcus pneumoniae serotype 19F (strain G54).